We begin with the raw amino-acid sequence, 548 residues long: Probable inorganic phosphate transporter 1-5 (548 aa).

At 1–23 the chain is on the cytoplasmic side; sequence MVQDRKVLDALDTAKTQWYHFTA. The helical transmembrane segment at 24–44 threads the bilayer; sequence VVIAGMGFFTDAYDLFSISLV. Topologically, residues 45-69 are extracellular; that stretch reads TKLLGRIYYFNPASKSPGSLPPNVS. A helical transmembrane segment spans residues 70-90; sequence AAVNGVAFCGTLAGQLFFGWL. Residues 91 to 98 are Cytoplasmic-facing; sequence GDKMGRKK. The chain crosses the membrane as a helical span at residues 99 to 119; the sequence is VYGMTLMLMVICCLASGLSFG. Over 120 to 123 the chain is Extracellular; that stretch reads SSAK. Residues 124–144 form a helical membrane-spanning segment; it reads GVMATLCFFRFWLGFGIGGDY. The Cytoplasmic portion of the chain corresponds to 145 to 163; that stretch reads PLSATIMSEYANKRTRGAF. A helical membrane pass occupies residues 164 to 184; that stretch reads IAAVFAMQGFGNLTGGIVAII. The Extracellular segment spans residues 185–210; the sequence is VSAAFKLRFDAPAYRDDRAGSTVPQA. The helical transmembrane segment at 211 to 231 threads the bilayer; sequence DYAWRIVLMFGAIPALLTYYW. At 232–303 the chain is on the cytoplasmic side; it reads RMKMPETARY…REFARRHGHH (72 aa). The helical transmembrane segment at 304–324 threads the bilayer; sequence LLGTTVCWFVLDIAYYSQNLF. Topologically, residues 325–355 are extracellular; it reads QKDIYTAVQWLPKADTMSALEEMFKISRAQT. A helical transmembrane segment spans residues 356–376; that stretch reads LVALCGTIPGYWFTVLFIDIV. Residues 377-378 lie on the Cytoplasmic side of the membrane; sequence GR. A helical membrane pass occupies residues 379–399; sequence FAIQLGGFFLMTAFMLGLAVP. At 400-405 the chain is on the extracellular side; it reads YHHWTT. Residues 406–426 traverse the membrane as a helical segment; sequence PGNHVGFVVMYAFTFFFANFG. The Cytoplasmic portion of the chain corresponds to 427–449; it reads PNSTTFIVPAEIFPARLRSTCHG. Residues 450–470 form a helical membrane-spanning segment; that stretch reads ISSAAGKMGAIVGSFGFLYAA. At 471 to 490 the chain is on the extracellular side; that stretch reads QSTDPSKTDAGYPRGIGVRN. Residues 491–511 form a helical membrane-spanning segment; it reads SLFLLAGCNVVGFLFTFLVPE. At 512–548 the chain is on the cytoplasmic side; that stretch reads SKGKSLEELSGENEMEAEPAAATNSYRQTVPDSGQSE. A disordered region spans residues 518–548; that stretch reads EELSGENEMEAEPAAATNSYRQTVPDSGQSE. A compositionally biased stretch (polar residues) spans 533 to 548; that stretch reads ATNSYRQTVPDSGQSE.

It belongs to the major facilitator superfamily. Phosphate:H(+) symporter (TC 2.A.1.9) family. In terms of tissue distribution, expressed at low levels in roots.

Its subcellular location is the membrane. In terms of biological role, high-affinity transporter for external inorganic phosphate. This chain is Probable inorganic phosphate transporter 1-5 (PHT1-5), found in Oryza sativa subsp. japonica (Rice).